The following is a 160-amino-acid chain: Lipoprotein signal peptidase (160 aa).

2 consecutive transmembrane segments (helical) span residues 63 to 83 (YRLP…AVTF) and 89 to 109 (DQHL…GNLI). Active-site residues include Asp119 and Asp137. A helical transmembrane segment spans residues 132-152 (AFNVADSAICVGVALLAVDMI).

Belongs to the peptidase A8 family.

Its subcellular location is the cell inner membrane. The enzyme catalyses Release of signal peptides from bacterial membrane prolipoproteins. Hydrolyzes -Xaa-Yaa-Zaa-|-(S,diacylglyceryl)Cys-, in which Xaa is hydrophobic (preferably Leu), and Yaa (Ala or Ser) and Zaa (Gly or Ala) have small, neutral side chains.. It participates in protein modification; lipoprotein biosynthesis (signal peptide cleavage). This protein specifically catalyzes the removal of signal peptides from prolipoproteins. This chain is Lipoprotein signal peptidase, found in Geobacter sulfurreducens (strain ATCC 51573 / DSM 12127 / PCA).